A 522-amino-acid polypeptide reads, in one-letter code: Zinc finger and BTB domain-containing protein 18 (522 aa).

Positions 24 to 91 constitute a BTB domain; sequence CDCTVLVGDA…MYEGKLQFKD (68 aa). Residues 121-143 are compositionally biased toward basic and acidic residues; the sequence is ATTEADSTKKEEDASSCSDKVES. A disordered region spans residues 121 to 165; it reads ATTEADSTKKEEDASSCSDKVESLSDGSSHMAGDLPSDEDEGEDE. Serine 157 is subject to Phosphoserine. Lysine 273 is covalently cross-linked (Glycyl lysine isopeptide (Lys-Gly) (interchain with G-Cter in SUMO2)). The interaction with DNMT3A stretch occupies residues 310–427; sequence EPAHLAPLRE…TFSCMYTLKR (118 aa). 4 C2H2-type zinc fingers span residues 370-392, 410-432, 438-460, and 466-489; these read FMCP…LSTH, PTCS…ERTH, YTCT…AVVH, and HACK…RKFH. 2 positions are modified to phosphoserine: serine 516 and serine 517.

Belongs to the krueppel C2H2-type zinc-finger protein family. ZBTB18 subfamily. In terms of assembly, interacts with DNMT3A.

The protein resides in the nucleus. In terms of biological role, transcriptional repressor that plays a role in various developmental processes such as myogenesis and brain development. Specifically binds the consensus DNA sequence 5'-[AC]ACATCTG[GT][AC]-3' which contains the E box core, and acts by recruiting chromatin remodeling multiprotein complexes. Plays a key role in myogenesis by directly repressing the expression of ID2 and ID3, 2 inhibitors of skeletal myogenesis. Also involved in controlling cell division of progenitor cells and regulating the survival of postmitotic cortical neurons. May also play a role in the organization of chromosomes in the nucleus. The polypeptide is Zinc finger and BTB domain-containing protein 18 (ZBTB18) (Bos taurus (Bovine)).